Here is a 240-residue protein sequence, read N- to C-terminus: Pyridoxine 5'-phosphate synthase (240 aa).

Asn-7 lines the 3-amino-2-oxopropyl phosphate pocket. Asp-9–His-10 is a 1-deoxy-D-xylulose 5-phosphate binding site. Position 18 (Arg-18) interacts with 3-amino-2-oxopropyl phosphate. His-43 serves as the catalytic Proton acceptor. The 1-deoxy-D-xylulose 5-phosphate site is built by Arg-45 and His-50. Residue Glu-70 is the Proton acceptor of the active site. Residue Thr-100 coordinates 1-deoxy-D-xylulose 5-phosphate. His-191 acts as the Proton donor in catalysis. 3-amino-2-oxopropyl phosphate-binding positions include Gly-192 and Gly-213–His-214.

Belongs to the PNP synthase family. In terms of assembly, homooctamer; tetramer of dimers.

The protein resides in the cytoplasm. The enzyme catalyses 3-amino-2-oxopropyl phosphate + 1-deoxy-D-xylulose 5-phosphate = pyridoxine 5'-phosphate + phosphate + 2 H2O + H(+). Its pathway is cofactor biosynthesis; pyridoxine 5'-phosphate biosynthesis; pyridoxine 5'-phosphate from D-erythrose 4-phosphate: step 5/5. Its function is as follows. Catalyzes the complicated ring closure reaction between the two acyclic compounds 1-deoxy-D-xylulose-5-phosphate (DXP) and 3-amino-2-oxopropyl phosphate (1-amino-acetone-3-phosphate or AAP) to form pyridoxine 5'-phosphate (PNP) and inorganic phosphate. The sequence is that of Pyridoxine 5'-phosphate synthase from Trichodesmium erythraeum (strain IMS101).